The following is a 71-amino-acid chain: MQKLNKHLKKKKQKRKKMKKKLNNEFQEVIDFLKSLPEGRRVYIEMSGIWIEVTKEEAINYLKSKINEKEA.

Positions 1–20 (MQKLNKHLKKKKQKRKKMKK) are disordered.

This is an uncharacterized protein from Methanocaldococcus jannaschii (strain ATCC 43067 / DSM 2661 / JAL-1 / JCM 10045 / NBRC 100440) (Methanococcus jannaschii).